We begin with the raw amino-acid sequence, 233 residues long: Pre-mRNA-splicing factor syf-2 (233 aa).

Residues 1-16 show a composition bias toward polar residues; the sequence is MSDSEQTSSGTASSGS. Disordered regions lie at residues 1-80 and 95-119; these read MSDS…EDKG and VTEK…YEDM. Basic and acidic residues predominate over residues 17-80; sequence KMKDFNQRFR…QDRKEAEDKG (64 aa). A coiled-coil region spans residues 18-77; the sequence is MKDFNQRFRDLHKMRQKARKENHAQVVEEDRRKKLPKNFEAKKERDQWQVKELQDRKEAE.

This sequence belongs to the SYF2 family. In terms of assembly, may be part of a spliceosome complex.

The protein localises to the nucleus. In terms of biological role, may be involved in pre-mRNA splicing. The chain is Pre-mRNA-splicing factor syf-2 from Caenorhabditis briggsae.